A 388-amino-acid polypeptide reads, in one-letter code: DNA replication and repair protein RecF (388 aa).

30-37 (GANGNGKT) is an ATP binding site.

It belongs to the RecF family.

The protein localises to the cytoplasm. Its function is as follows. The RecF protein is involved in DNA metabolism; it is required for DNA replication and normal SOS inducibility. RecF binds preferentially to single-stranded, linear DNA. It also seems to bind ATP. This chain is DNA replication and repair protein RecF, found in Nocardia farcinica (strain IFM 10152).